The chain runs to 369 residues: Porin-like protein BUsg_347 (369 aa).

The N-terminal stretch at 1-23 (MKNHKSLAILIPMLFAGSTAVNA) is a signal peptide.

The protein belongs to the Gram-negative porin family. As to quaternary structure, homotrimer.

It localises to the cell outer membrane. Functionally, forms pores that allow passive diffusion of small molecules across the membrane. This chain is Porin-like protein BUsg_347, found in Buchnera aphidicola subsp. Schizaphis graminum (strain Sg).